A 77-amino-acid polypeptide reads, in one-letter code: RNA-binding protein Hfq (77 aa).

The 60-residue stretch at 9-68 (DPFLNALRKEHIPVAIYLVNGIKLQGQIESFDQFVILLKNTVSQMVYKHAISTVVPARAI) folds into the Sm domain.

The protein belongs to the Hfq family. As to quaternary structure, homohexamer.

RNA chaperone that binds small regulatory RNA (sRNAs) and mRNAs to facilitate mRNA translational regulation in response to envelope stress, environmental stress and changes in metabolite concentrations. Also binds with high specificity to tRNAs. The sequence is that of RNA-binding protein Hfq from Psychromonas ingrahamii (strain DSM 17664 / CCUG 51855 / 37).